The chain runs to 334 residues: MRTDELDYELPQELIAQRPAEPRDASRLMVVDVPSRGISHHVFRELPRFLGPGDVLVLNETKVIPARLFASRPGGGEVELLFLGERGGAWEALARPSRRLRPGMPLSAGEGERLEVVEELGEGRWLVRGRDVPGLLERAGRMPLPPYIEPTPEAEASYQTVYARTPGSAAAPTAGFHFTGRVLRGVEEAGARIARVVLHVGLGTFAPVREERLEDHRMHREYYAVPEETARAVEEAERVVAVGTTVVRTLESWARSGVREGESELFIYPGYEWRAVDALITNFHLPRSTLLALVMSFAGRELVREAYEVAVRERYRFYSFGDAMLLLGGGRSLR.

The protein belongs to the QueA family. As to quaternary structure, monomer.

Its subcellular location is the cytoplasm. It catalyses the reaction 7-aminomethyl-7-carbaguanosine(34) in tRNA + S-adenosyl-L-methionine = epoxyqueuosine(34) in tRNA + adenine + L-methionine + 2 H(+). It participates in tRNA modification; tRNA-queuosine biosynthesis. Transfers and isomerizes the ribose moiety from AdoMet to the 7-aminomethyl group of 7-deazaguanine (preQ1-tRNA) to give epoxyqueuosine (oQ-tRNA). This is S-adenosylmethionine:tRNA ribosyltransferase-isomerase from Rubrobacter xylanophilus (strain DSM 9941 / JCM 11954 / NBRC 16129 / PRD-1).